Consider the following 63-residue polypeptide: Cypmaclein (63 aa).

Belongs to the GASA family. Expressed in pollen (at protein level).

In Juniperus ashei (Ozark white cedar), this protein is Cypmaclein.